Consider the following 256-residue polypeptide: Enolase-phosphatase E1 (256 aa).

Positions 14 and 16 each coordinate Mg(2+). Substrate contacts are provided by residues Ser142–Ser143 and Lys176. Asp201 lines the Mg(2+) pocket.

The protein belongs to the HAD-like hydrolase superfamily. MasA/MtnC family. In terms of assembly, monomer. The cofactor is Mg(2+).

It is found in the cytoplasm. It localises to the nucleus. It carries out the reaction 5-methylsulfanyl-2,3-dioxopentyl phosphate + H2O = 1,2-dihydroxy-5-(methylsulfanyl)pent-1-en-3-one + phosphate. Its pathway is amino-acid biosynthesis; L-methionine biosynthesis via salvage pathway; L-methionine from S-methyl-5-thio-alpha-D-ribose 1-phosphate: step 3/6. The protein operates within amino-acid biosynthesis; L-methionine biosynthesis via salvage pathway; L-methionine from S-methyl-5-thio-alpha-D-ribose 1-phosphate: step 4/6. In terms of biological role, bifunctional enzyme that catalyzes the enolization of 2,3-diketo-5-methylthiopentyl-1-phosphate (DK-MTP-1-P) into the intermediate 2-hydroxy-3-keto-5-methylthiopentenyl-1-phosphate (HK-MTPenyl-1-P), which is then dephosphorylated to form the acireductone 1,2-dihydroxy-3-keto-5-methylthiopentene (DHK-MTPene). The sequence is that of Enolase-phosphatase E1 from Drosophila simulans (Fruit fly).